A 423-amino-acid polypeptide reads, in one-letter code: Histidine--tRNA ligase 2 (423 aa).

This sequence belongs to the class-II aminoacyl-tRNA synthetase family. Homodimer.

It is found in the cytoplasm. It catalyses the reaction tRNA(His) + L-histidine + ATP = L-histidyl-tRNA(His) + AMP + diphosphate + H(+). The protein is Histidine--tRNA ligase 2 of Bacillus cereus (strain ATCC 10987 / NRS 248).